The primary structure comprises 253 residues: MEMKQISETTLKITISMDDLEERGMELKDFLIPQEKTEEFFYSVMDELDLPDNFKDSGMLSFRVTPRKDRLDVFVTKSEINKDINLEDLAEFGDMSQMTPEDFFKSLEQSMREKGDVKAHEKLEQIEEIMEDVVEATLANQSEAADPSTNHESEPLDYVHYVLDFSTITEAVAFAKTIDFSIEASELYKGSNCYHMTILLDVQQQPSYFANVMYARLIEHANPGSKTRAYLQEHGLQLMLDGAVEQLQKIELG.

Belongs to the MecA family. As to quaternary structure, homodimer.

In terms of biological role, enables the recognition and targeting of unfolded and aggregated proteins to the ClpC protease or to other proteins involved in proteolysis. In Streptococcus pyogenes serotype M6 (strain ATCC BAA-946 / MGAS10394), this protein is Adapter protein MecA.